The sequence spans 947 residues: DNA polymerase (947 aa).

It belongs to the DNA polymerase type-B family.

It catalyses the reaction DNA(n) + a 2'-deoxyribonucleoside 5'-triphosphate = DNA(n+1) + diphosphate. This Red sea bream iridovirus (RSIV) protein is DNA polymerase.